The sequence spans 547 residues: Glucose-6-phosphate isomerase (547 aa).

E353 acts as the Proton donor in catalysis. Residues H384 and K512 contribute to the active site.

The protein belongs to the GPI family.

It localises to the cytoplasm. The enzyme catalyses alpha-D-glucose 6-phosphate = beta-D-fructose 6-phosphate. Its pathway is carbohydrate biosynthesis; gluconeogenesis. The protein operates within carbohydrate degradation; glycolysis; D-glyceraldehyde 3-phosphate and glycerone phosphate from D-glucose: step 2/4. Functionally, catalyzes the reversible isomerization of glucose-6-phosphate to fructose-6-phosphate. The polypeptide is Glucose-6-phosphate isomerase (Pseudoalteromonas atlantica (strain T6c / ATCC BAA-1087)).